We begin with the raw amino-acid sequence, 213 residues long: uncharacterized protein (213 aa).

3 residues coordinate S-adenosyl-L-methionine: glycine 53, glutamate 74, and aspartate 96.

Belongs to the methyltransferase superfamily. YrrT family.

Its function is as follows. Could be a S-adenosyl-L-methionine-dependent methyltransferase. This is an uncharacterized protein from Bacillus pumilus (strain SAFR-032).